Reading from the N-terminus, the 367-residue chain is Alginate lyase (367 aa).

An N-terminal signal peptide occupies residues 1–24 (MTIINRKTAPALLALALFGGAAQA). Substrate is bound by residues 63–64 (SK), 136–137 (HT), and Y254.

This sequence belongs to the polysaccharide lyase 5 family.

It localises to the periplasm. It carries out the reaction Eliminative cleavage of alginate to give oligosaccharides with 4-deoxy-alpha-L-erythro-hex-4-enuronosyl groups at their non-reducing ends and beta-D-mannuronate at their reducing end.. Catalyzes the depolymerization of alginate by cleaving the beta-1,4 glycosidic bond between two adjacent sugar residues via a beta-elimination mechanism. May serve to degrade mislocalized alginate that is trapped in the periplasmic space. This is Alginate lyase from Pseudomonas entomophila (strain L48).